Consider the following 316-residue polypeptide: DNA-directed RNA polymerase subunit alpha (316 aa).

Residues 1 to 230 (MIEFEKPNIH…EHLAMFVDLT (230 aa)) are alpha N-terminal domain (alpha-NTD). Residues 247–316 (KEKMLEMTIE…DLGLSLRKED (70 aa)) form an alpha C-terminal domain (alpha-CTD) region.

Belongs to the RNA polymerase alpha chain family. Homodimer. The RNAP catalytic core consists of 2 alpha, 1 beta, 1 beta' and 1 omega subunit. When a sigma factor is associated with the core the holoenzyme is formed, which can initiate transcription.

The enzyme catalyses RNA(n) + a ribonucleoside 5'-triphosphate = RNA(n+1) + diphosphate. Its function is as follows. DNA-dependent RNA polymerase catalyzes the transcription of DNA into RNA using the four ribonucleoside triphosphates as substrates. The chain is DNA-directed RNA polymerase subunit alpha from Levilactobacillus brevis (strain ATCC 367 / BCRC 12310 / CIP 105137 / JCM 1170 / LMG 11437 / NCIMB 947 / NCTC 947) (Lactobacillus brevis).